The chain runs to 377 residues: MNNTEFYDRLGVSKDASQDEIKKAYRKMSKKYHPDINKEPGAEQKYKDVQEAYETLSDAQKRSAYDQYGAAGAQGGFGGGGFGGFDGGGFGGFEDIFSSFFGGGGGMRNPNAPRQGDDLQYRVNLTFEEAIFGVEKDVSYHREATCHTCAGSGAKPGTSPVTCGRCHGSGVINVDTQTPLGMMRRQVTCDVCHGSGKEIKEPCQTCHGTGHEKETHKVSVKIPAGVETGQQIRLQGQGEAGFNGGPYGDLFVVLNVLPSQKFERNGSTIYYNLNISFVQAALGDTVDIPTVHGDVEMAIPAGTQTGKVFRLKGKGAPKLRGAGQGDQHVTVNIVTPTKLNEKQKEALRAFAEASGQEISTPKKKGFFDKMKDALEDI.

The region spanning glutamate 5–glycine 69 is the J domain. A CR-type zinc finger spans residues glycine 133–threonine 215. Zn(2+) contacts are provided by cysteine 146, cysteine 149, cysteine 163, cysteine 166, cysteine 189, cysteine 192, cysteine 203, and cysteine 206. 4 CXXCXGXG motif repeats span residues cysteine 146–glycine 153, cysteine 163–glycine 170, cysteine 189–glycine 196, and cysteine 203–glycine 210.

It belongs to the DnaJ family. As to quaternary structure, homodimer. Requires Zn(2+) as cofactor.

The protein resides in the cytoplasm. Participates actively in the response to hyperosmotic and heat shock by preventing the aggregation of stress-denatured proteins and by disaggregating proteins, also in an autonomous, DnaK-independent fashion. Unfolded proteins bind initially to DnaJ; upon interaction with the DnaJ-bound protein, DnaK hydrolyzes its bound ATP, resulting in the formation of a stable complex. GrpE releases ADP from DnaK; ATP binding to DnaK triggers the release of the substrate protein, thus completing the reaction cycle. Several rounds of ATP-dependent interactions between DnaJ, DnaK and GrpE are required for fully efficient folding. Also involved, together with DnaK and GrpE, in the DNA replication of plasmids through activation of initiation proteins. This Streptococcus uberis (strain ATCC BAA-854 / 0140J) protein is Chaperone protein DnaJ.